The primary structure comprises 407 residues: 5-aminolevulinate synthase 1 (407 aa).

Substrate is bound by residues arginine 21, serine 137, and lysine 156. Residues serine 189, histidine 217, and threonine 245 each coordinate pyridoxal 5'-phosphate. The active site involves lysine 248. Lysine 248 carries the post-translational modification N6-(pyridoxal phosphate)lysine. Pyridoxal 5'-phosphate contacts are provided by serine 277 and threonine 278. Residue threonine 363 coordinates substrate.

Belongs to the class-II pyridoxal-phosphate-dependent aminotransferase family. Homodimer. Pyridoxal 5'-phosphate serves as cofactor.

It catalyses the reaction succinyl-CoA + glycine + H(+) = 5-aminolevulinate + CO2 + CoA. It participates in porphyrin-containing compound metabolism; protoporphyrin-IX biosynthesis; 5-aminolevulinate from glycine: step 1/1. The chain is 5-aminolevulinate synthase 1 (hemA) from Cereibacter sphaeroides (strain ATCC 17023 / DSM 158 / JCM 6121 / CCUG 31486 / LMG 2827 / NBRC 12203 / NCIMB 8253 / ATH 2.4.1.) (Rhodobacter sphaeroides).